Here is a 454-residue protein sequence, read N- to C-terminus: Ribosomal protein uS12 methylthiotransferase RimO (454 aa).

Residues 14–125 (SKVAFSHVGC…IAKVLDRVEK (112 aa)) form the MTTase N-terminal domain. Positions 23, 59, 88, 163, 167, and 170 each coordinate [4Fe-4S] cluster. In terms of domain architecture, Radical SAM core spans 149–378 (DKNKFVAYLR…ISVQQNISKD (230 aa)). Positions 381–452 (QSYVGSKMKI…EYDLYGETIK (72 aa)) constitute a TRAM domain.

It belongs to the methylthiotransferase family. RimO subfamily. [4Fe-4S] cluster is required as a cofactor.

It is found in the cytoplasm. It catalyses the reaction L-aspartate(89)-[ribosomal protein uS12]-hydrogen + (sulfur carrier)-SH + AH2 + 2 S-adenosyl-L-methionine = 3-methylsulfanyl-L-aspartate(89)-[ribosomal protein uS12]-hydrogen + (sulfur carrier)-H + 5'-deoxyadenosine + L-methionine + A + S-adenosyl-L-homocysteine + 2 H(+). In terms of biological role, catalyzes the methylthiolation of an aspartic acid residue of ribosomal protein uS12. In Prochlorococcus marinus (strain MIT 9312), this protein is Ribosomal protein uS12 methylthiotransferase RimO.